The following is a 289-amino-acid chain: YLVNPAGYAALGAYMFLLILIGFPVNFLTLYVTLEHKKLRTPLNYILLNLAVADLFMVLGGFTTTMYTSMHGYFVLGRLGCNLEGFFATLGGEIALWSLVVLAIERWIVGLKPIRNFRFTEDHAIMGLAFSWVMALSCAVPPLAGWLRYIPEGIQGSCGVDYYTRAEGFNNESFVIYMFTVHFLIPLSVIFFCYGRLLCAVKEAAAAQQESETTQRAEKEVSRMVVIMVIGFLVCWLPYASVAWWIFCNQGSDFGPIFMTLPSFFAKRPAIYNPMIYICMNKQFRHCMI.

Residues tyrosine 1 to glycine 7 lie on the Extracellular side of the membrane. Residues tyrosine 8 to valine 32 traverse the membrane as a helical segment. The Cytoplasmic segment spans residues threonine 33 to asparagine 44. The chain crosses the membrane as a helical span at residues tyrosine 45 to tyrosine 67. Residues threonine 68–cysteine 81 lie on the Extracellular side of the membrane. Residues cysteine 81 and cysteine 158 are joined by a disulfide bond. The helical transmembrane segment at asparagine 82–isoleucine 104 threads the bilayer. The short motif at glutamate 105 to tryptophan 107 is the 'Ionic lock' involved in activated form stabilization element. The Cytoplasmic portion of the chain corresponds to glutamate 105–histidine 123. Residues alanine 124 to alanine 144 traverse the membrane as a helical segment. Topologically, residues glycine 145–serine 173 are extracellular. A glycan (N-linked (GlcNAc...) asparagine) is linked at asparagine 171. Residues phenylalanine 174–glycine 195 traverse the membrane as a helical segment. Residues arginine 196–arginine 223 lie on the Cytoplasmic side of the membrane. A helical transmembrane segment spans residues methionine 224–tryptophan 245. Topologically, residues isoleucine 246 to isoleucine 257 are extracellular. The chain crosses the membrane as a helical span at residues phenylalanine 258–cysteine 279. Lysine 267 carries the N6-(retinylidene)lysine modification. The Cytoplasmic segment spans residues methionine 280–isoleucine 289.

The protein belongs to the G-protein coupled receptor 1 family. Opsin subfamily. In terms of processing, phosphorylated on some or all of the serine and threonine residues present in the C-terminal region. Contains one covalently linked retinal chromophore.

The protein resides in the membrane. Its subcellular location is the cell projection. The protein localises to the cilium. It localises to the photoreceptor outer segment. Photoreceptor required for image-forming vision at low light intensity. While most salt water fish species use retinal as chromophore, most freshwater fish use 3-dehydroretinal, or a mixture of retinal and 3-dehydroretinal. Light-induced isomerization of 11-cis to all-trans retinal triggers a conformational change that activates signaling via G-proteins. Subsequent receptor phosphorylation mediates displacement of the bound G-protein alpha subunit by arrestin and terminates signaling. In Limnocottus pallidus (Ray-finned fish), this protein is Rhodopsin (rho).